The chain runs to 152 residues: Ubiquitin-conjugating enzyme E2 W (152 aa).

Met1 participates in a covalent cross-link: Peptide (Met-Gly) (interchain with G-Cter in ubiquitin). The UBC core domain maps to 4–152 (AATRRLMKEL…TRWWFHDDSV (149 aa)). The active-site Glycyl thioester intermediate is Cys92.

Belongs to the ubiquitin-conjugating enzyme family.

It catalyses the reaction S-ubiquitinyl-[E1 ubiquitin-activating enzyme]-L-cysteine + [E2 ubiquitin-conjugating enzyme]-L-cysteine = [E1 ubiquitin-activating enzyme]-L-cysteine + S-ubiquitinyl-[E2 ubiquitin-conjugating enzyme]-L-cysteine.. The catalysed reaction is S-ubiquitinyl-[E1 ubiquitin-activating enzyme]-L-cysteine + [acceptor protein]-N-terminal-amino acid = [E1 ubiquitin-activating enzyme]-L-cysteine + N-terminal-ubiquitinyl-[acceptor protein].. The protein operates within protein modification; protein ubiquitination. Functionally, accepts ubiquitin from the E1 complex and catalyzes its covalent attachment to other proteins. Together with ubc-18, required for the ubiquitination of membranous organelles, and the removal of paternal mitochondria from early embryos. This is Ubiquitin-conjugating enzyme E2 W from Caenorhabditis elegans.